Reading from the N-terminus, the 811-residue chain is Probable inorganic carbon transporter subunit DabA (811 aa).

The Zn(2+) site is built by cysteine 336, aspartate 338, histidine 498, and cysteine 513.

The protein belongs to the inorganic carbon transporter (TC 9.A.2) DabA family. In terms of assembly, forms a complex with DabB. Requires Zn(2+) as cofactor.

The protein resides in the cell inner membrane. Part of an energy-coupled inorganic carbon pump. The protein is Probable inorganic carbon transporter subunit DabA of Azorhizobium caulinodans (strain ATCC 43989 / DSM 5975 / JCM 20966 / LMG 6465 / NBRC 14845 / NCIMB 13405 / ORS 571).